Consider the following 833-residue polypeptide: Scavenger receptor class F member 2 (833 aa).

The N-terminal stretch at 1-33 is a signal peptide; the sequence is MEGAGSRGAGPARRQGARGLGLLLLLWLLPGLA. Residues 34–433 lie on the Extracellular side of the membrane; sequence APQDLNPRGR…ACHLETNQRK (400 aa). 6 EGF-like domains span residues 63–102, 114–145, 140–174, 175–204, 205–233, and 228–262; these read LGDE…ANCD, CKER…ARCE, WGAR…AQCA, SACY…RSCN, NQCA…ARCD, and FGAR…KYCR. Cystine bridges form between cysteine 67–cysteine 78, cysteine 72–cysteine 90, cysteine 92–cysteine 101, cysteine 118–cysteine 126, cysteine 120–cysteine 133, cysteine 135–cysteine 144, cysteine 148–cysteine 155, cysteine 150–cysteine 162, cysteine 164–cysteine 173, cysteine 177–cysteine 185, cysteine 179–cysteine 192, cysteine 194–cysteine 203, cysteine 207–cysteine 214, cysteine 209–cysteine 221, cysteine 223–cysteine 232, cysteine 236–cysteine 243, cysteine 238–cysteine 250, and cysteine 252–cysteine 261. An N-linked (GlcNAc...) asparagine glycan is attached at asparagine 75. 2 N-linked (GlcNAc...) asparagine glycosylation sites follow: asparagine 302 and asparagine 357. One can recognise an EGF-like 7 domain in the interval 364–395; sequence CAFVCSDCGSGHCDFQSGRCLCSPGVHGPHCN. 3 disulfides stabilise this stretch: cysteine 368–cysteine 376, cysteine 371–cysteine 383, and cysteine 385–cysteine 394. A glycan (N-linked (GlcNAc...) asparagine) is linked at asparagine 395. A helical membrane pass occupies residues 434-454; the sequence is GVMGAGALLTLLLGLLLSLLG. Over 455–833 the chain is Cytoplasmic; the sequence is CCCACRGKDS…SRAGTAPGAS (379 aa). Phosphoserine occurs at positions 538 and 600. Residues 578–833 form a disordered region; that stretch reads SLEPTGTSTP…SRAGTAPGAS (256 aa). Tyrosine 615 is subject to Phosphotyrosine. Residues 619 to 630 are compositionally biased toward basic and acidic residues; sequence ARREARPARTRN. Serine 638, serine 640, and serine 695 each carry phosphoserine. Position 712 is a phosphothreonine (threonine 712). The segment covering 748-761 has biased composition (basic and acidic residues); that stretch reads ELRDKTRSLGRAEK. Over residues 781-798 the composition is skewed to low complexity; it reads ASASEASGSEKAAASAPA. Basic residues predominate over residues 804–816; the sequence is KKTPIQKPPRKKS.

As to quaternary structure, homophilic and heterophilic interaction via its extracellular domain. Interacts with SCARF1. The heterophilic interaction with SCARF1, which is stronger than the homophilic interaction with itself, is suppressed by the presence of SCARF1 ligand such as Ac-LDL.

Its subcellular location is the membrane. Its function is as follows. Probable adhesion protein, which mediates homophilic and heterophilic interactions. In contrast to SCARF1, it poorly mediates the binding and degradation of acetylated low density lipoprotein (Ac-LDL). This Mus musculus (Mouse) protein is Scavenger receptor class F member 2 (Scarf2).